The chain runs to 26 residues: Protein YsdD (26 aa).

The segment at 1–26 (MTIDKNWLNRSNKDPGRSLRFTHQPV) is disordered.

The chain is Protein YsdD from Escherichia coli (strain K12).